The chain runs to 301 residues: NAD kinase 2 (301 aa).

The Proton acceptor role is filled by aspartate 77. NAD(+) is bound by residues 77-78, arginine 82, 151-152, arginine 162, aspartate 181, and 192-197; these read DG, NE, and TAYAFS.

Belongs to the NAD kinase family. It depends on a divalent metal cation as a cofactor.

The protein resides in the cytoplasm. It carries out the reaction NAD(+) + ATP = ADP + NADP(+) + H(+). In terms of biological role, involved in the regulation of the intracellular balance of NAD and NADP, and is a key enzyme in the biosynthesis of NADP. Catalyzes specifically the phosphorylation on 2'-hydroxyl of the adenosine moiety of NAD to yield NADP. The protein is NAD kinase 2 of Streptomyces avermitilis (strain ATCC 31267 / DSM 46492 / JCM 5070 / NBRC 14893 / NCIMB 12804 / NRRL 8165 / MA-4680).